The primary structure comprises 445 residues: 23S rRNA (uracil(1939)-C(5))-methyltransferase RlmD (445 aa).

One can recognise a TRAM domain in the interval Ser12–Lys70. [4Fe-4S] cluster is bound by residues Cys83, Cys89, Cys92, and Cys171. S-adenosyl-L-methionine-binding residues include Gln278, Phe307, Asn312, Glu328, Asp355, and Asp375. The active-site Nucleophile is Cys401.

This sequence belongs to the class I-like SAM-binding methyltransferase superfamily. RNA M5U methyltransferase family. RlmD subfamily.

It carries out the reaction uridine(1939) in 23S rRNA + S-adenosyl-L-methionine = 5-methyluridine(1939) in 23S rRNA + S-adenosyl-L-homocysteine + H(+). Catalyzes the formation of 5-methyl-uridine at position 1939 (m5U1939) in 23S rRNA. This Shewanella halifaxensis (strain HAW-EB4) protein is 23S rRNA (uracil(1939)-C(5))-methyltransferase RlmD.